We begin with the raw amino-acid sequence, 508 residues long: Photosystem II CP47 reaction center protein (508 aa).

The next 6 helical transmembrane spans lie at 21–36, 101–115, 140–156, 203–218, 237–252, and 457–472; these read SVHI…WAGS, IVFS…IWHW, GIHL…FGVF, IAAG…FHLS, VLSS…AFVV, and SFAL…HGAR.

It belongs to the PsbB/PsbC family. PsbB subfamily. In terms of assembly, PSII is composed of 1 copy each of membrane proteins PsbA, PsbB, PsbC, PsbD, PsbE, PsbF, PsbH, PsbI, PsbJ, PsbK, PsbL, PsbM, PsbT, PsbX, PsbY, PsbZ, Psb30/Ycf12, at least 3 peripheral proteins of the oxygen-evolving complex and a large number of cofactors. It forms dimeric complexes. It depends on Binds multiple chlorophylls. PSII binds additional chlorophylls, carotenoids and specific lipids. as a cofactor.

It localises to the plastid. The protein resides in the chloroplast thylakoid membrane. Functionally, one of the components of the core complex of photosystem II (PSII). It binds chlorophyll and helps catalyze the primary light-induced photochemical processes of PSII. PSII is a light-driven water:plastoquinone oxidoreductase, using light energy to abstract electrons from H(2)O, generating O(2) and a proton gradient subsequently used for ATP formation. The chain is Photosystem II CP47 reaction center protein from Jasminum nudiflorum (Winter jasmine).